The chain runs to 355 residues: Probable butyrate kinase (355 aa).

Belongs to the acetokinase family.

Its subcellular location is the cytoplasm. It catalyses the reaction butanoate + ATP = butanoyl phosphate + ADP. This is Probable butyrate kinase from Clostridium botulinum (strain Alaska E43 / Type E3).